A 142-amino-acid chain; its full sequence is Galectin-10 (142 aa).

N-acetylserine is present on Ser-2. One can recognise a Galectin domain in the interval 6 to 138 (VPYTEAASLS…DISLTKFNVS (133 aa)).

Interacts with CEL. As to expression, expressed abundantly in the bone marrow. Expressed exclusively by eosinophils and basophils. Not detected in monocytes and neutrophils. Expressed in CD25-positive regulatory T-cells (Treg) (at protein level). Found in intestinal tissue from patients with Celiac disease, expression is directly related to the histological grade of mucosal damage and to the number of eosinophils found in the duodenal lesion (at protein level). Found in sputum of patients with eosinophilic inflammatory diseases such as asthma (at protein level).

It is found in the cytoplasm. It localises to the cytosol. The protein resides in the cytoplasmic granule. Functionally, regulates immune responses through the recognition of cell-surface glycans. Essential for the anergy and suppressive function of CD25-positive regulatory T-cells (Treg). In Homo sapiens (Human), this protein is Galectin-10 (CLC).